The chain runs to 214 residues: Adenylate kinase (214 aa).

Residue 10 to 15 participates in ATP binding; that stretch reads GAGKGT. Positions 30–59 are NMP; sequence STGDILRAAVKDMTPMGGKAKSFMDAGALV. AMP-binding positions include Thr31, Arg36, 57–59, 85–88, and Gln92; these read ALV and GFPR. The LID stretch occupies residues 126-163; sequence GRRTCRNCGKGFHVSFDPPKSSGICDECSGELYQRDDD. Arg127 is an ATP binding site. Zn(2+)-binding residues include Cys130, Cys133, Cys150, and Cys153. Arg160 and Arg171 together coordinate AMP. Gly199 serves as a coordination point for ATP.

It belongs to the adenylate kinase family. In terms of assembly, monomer.

The protein resides in the cytoplasm. It catalyses the reaction AMP + ATP = 2 ADP. The protein operates within purine metabolism; AMP biosynthesis via salvage pathway; AMP from ADP: step 1/1. In terms of biological role, catalyzes the reversible transfer of the terminal phosphate group between ATP and AMP. Plays an important role in cellular energy homeostasis and in adenine nucleotide metabolism. This chain is Adenylate kinase, found in Geotalea daltonii (strain DSM 22248 / JCM 15807 / FRC-32) (Geobacter daltonii).